The chain runs to 423 residues: MDLRATSSNDSNATSGYSDTAAVDWDEGENATGSGSLPDPELSYQIITSLFLGALILCSIFGNSCVVAAIALERSLQNVANYLIGSLAVTDLMVSVLVLPMAALYQVLNKWTLGQDICDLFIALDVLCCTSSILHLCAIALDRYWAITDPIDYVNKRTPRRAAVLISVTWLIGFSISIPPMLGWRSAEDRANPDACIISQDPGYTIYSTFGAFYIPLILMLVLYGRIFKAARFRIRKTVKKTEKAKASDMCLTLSPAVFHKRANGDAVSAEWKRGYKFKPSSPCANGAVRHGEEMESLEIIEVNSNSKTHLPLPNTPQSSSHENINEKTTGTRRKIALARERKTVKTLGIIMGTFIFCWLPFFIVALVLPFCAENCYMPEWLGAVINWLGYSNSLLNPIIYAYFNKDFQSAFKKILRCKFHRH.

Residues 1 to 47 (MDLRATSSNDSNATSGYSDTAAVDWDEGENATGSGSLPDPELSYQII) are Extracellular-facing. Asparagine 9, asparagine 12, and asparagine 30 each carry an N-linked (GlcNAc...) asparagine glycan. The chain crosses the membrane as a helical span at residues 48 to 68 (TSLFLGALILCSIFGNSCVVA). At 69–82 (AIALERSLQNVANY) the chain is on the cytoplasmic side. The helical transmembrane segment at 83-107 (LIGSLAVTDLMVSVLVLPMAALYQV) threads the bilayer. Over 108–116 (LNKWTLGQD) the chain is Extracellular. Residues 117–141 (ICDLFIALDVLCCTSSILHLCAIAL) form a helical membrane-spanning segment. The cysteines at positions 118 and 196 are disulfide-linked. Serotonin is bound by residues aspartate 125 and cysteine 129. The short motif at 142–144 (DRY) is the DRY motif; important for ligand-induced conformation changes element. The Cytoplasmic segment spans residues 142-161 (DRYWAITDPIDYVNKRTPRR). Residues 162–183 (AAVLISVTWLIGFSISIPPMLG) traverse the membrane as a helical segment. Residues 184–202 (WRSAEDRANPDACIISQDP) are Extracellular-facing. A helical transmembrane segment spans residues 203-225 (GYTIYSTFGAFYIPLILMLVLYG). The Cytoplasmic portion of the chain corresponds to 226–347 (RIFKAARFRI…LARERKTVKT (122 aa)). The segment at 311-332 (LPLPNTPQSSSHENINEKTTGT) is disordered. Polar residues predominate over residues 316 to 329 (TPQSSSHENINEKT). 1D-myo-inositol 4-phosphate-binding residues include serine 320, lysine 346, threonine 347, and glycine 353. Residues 348–371 (LGIIMGTFIFCWLPFFIVALVLPF) form a helical membrane-spanning segment. Over 372–379 (CAENCYMP) the chain is Extracellular. Residues 380–404 (EWLGAVINWLGYSNSLLNPIIYAYF) traverse the membrane as a helical segment. Positions 397-401 (NPIIY) match the NPxxY motif; important for ligand-induced conformation changes and signaling motif. Residues phenylalanine 404, asparagine 405, and lysine 406 each contribute to the 1D-myo-inositol 4-phosphate site. The Cytoplasmic portion of the chain corresponds to 405 to 423 (NKDFQSAFKKILRCKFHRH).

The protein belongs to the G-protein coupled receptor 1 family. 5-hydroxytryptamine receptor subfamily.

Its subcellular location is the cell membrane. G-protein coupled receptor activity is regulated by lipids: phosphatidylinositol 4-phosphate increases HTR1A-mediated activity. Functionally, G-protein coupled receptor for 5-hydroxytryptamine (serotonin). Also functions as a receptor for various drugs and psychoactive substances. Ligand binding causes a conformation change that triggers signaling via guanine nucleotide-binding proteins (G proteins) and modulates the activity of downstream effectors, such as adenylate cyclase. HTR1A is coupled to G(i)/G(o) G alpha proteins and mediates inhibitory neurotransmission: signaling inhibits adenylate cyclase activity and activates a phosphatidylinositol-calcium second messenger system that regulates the release of Ca(2+) ions from intracellular stores. Beta-arrestin family members regulate signaling by mediating both receptor desensitization and resensitization processes. The chain is 5-hydroxytryptamine receptor 1A-alpha (htr1aa) from Takifugu rubripes (Japanese pufferfish).